Here is a 1317-residue protein sequence, read N- to C-terminus: WASH complex subunit 2 (1317 aa).

The tract at residues Met1–Asp219 is sufficient for interaction with WASHC3, WASHC4 and WASHC5; required for interaction with WASHC1. 5 positions are modified to phosphoserine: Ser157, Ser159, Ser204, Ser205, and Ser209. Positions Gly201–Asp213 are enriched in low complexity. Residues Gly201–Ser630 form a disordered region. 2 stretches are compositionally biased toward acidic residues: residues Asp219 to Asp232 and Asp250 to Glu274. Ser284 carries the phosphoserine modification. Basic and acidic residues-rich tracts occupy residues Leu289 to Pro325 and Asp366 to Pro376. Phosphothreonine is present on Thr323. Positions Ser348–Gln582 are sufficient for interaction with CCDC93. The interaction with VPS35 stretch occupies residues Arg349–Gln1317. Residues Leu358 to Phe368 carry the LFa 1 motif. Over residues Ala379–Val399 the composition is skewed to low complexity. 2 positions are modified to phosphoserine: Ser385 and Ser387. 2 short sequence motifs (LFa) span residues Leu433–Phe445 and Ile464–Phe473. Residues Thr500–Gly518 show a composition bias toward polar residues. 2 consecutive short sequence motifs (LFa) follow at residues Leu519–Phe530 and Leu554–Phe565. Phosphoserine is present on residues Ser521 and Ser526. The span at Leu529–Leu548 shows a compositional bias: low complexity. A compositionally biased stretch (low complexity) spans Pro569 to Gln582. Residues Glu583–Lys592 are compositionally biased toward basic and acidic residues. Positions Leu599–Thr611 match the LFa 6 motif. Residues Ser601 and Ser602 each carry the phosphoserine modification. Residues Ser613–Leu627 are compositionally biased toward basic and acidic residues. Short sequence motifs (LFa) lie at residues Leu646–Phe657 and Leu673–Phe685. Positions Thr667–Gln817 are disordered. Phosphoserine is present on Ser710. Basic and acidic residues predominate over residues Val717–Gly744. Ser763 and Ser778 each carry phosphoserine. Positions Glu788 to Pro810 are enriched in basic and acidic residues. Short sequence motifs (LFa) lie at residues Val815–Phe823 and Asp832–Phe838. The residue at position 853 (Ser853) is a Phosphoserine. Residues Leu854–Phe864 carry the LFa 11 motif. Disordered stretches follow at residues Ala867 to Ser926 and Glu960 to Pro1079. Basic and acidic residues predominate over residues Pro874–Trp906. Positions Gln912–Gln1317 are interaction with phospholipids. The segment covering Asn1003–Arg1021 has biased composition (basic residues). The required for interaction with F-actin-capping protein subunit alpha (CAPZA1 or CAPZA2 or CAPZA3) stretch occupies residues Lys1004–Arg1022. Residues Ser1029, Ser1047, Ser1064, and Ser1092 each carry the phosphoserine modification. The short motif at Leu1107–Phe1114 is the LFa 12 element. Residues Gly1119–Ser1141 form a disordered region. 6 short sequence motifs (LFa) span residues Val1147–Phe1161, Leu1177–Phe1185, Ile1210–Phe1216, Leu1238–Phe1246, Val1266–Phe1275, and Ile1306–Phe1314. Ser1152, Ser1155, and Ser1156 each carry phosphoserine. The disordered stretch occupies residues Asp1158 to Asp1183. Residues Ser1277–Gln1317 form a disordered region. Ser1316 carries the phosphoserine modification.

The protein belongs to the FAM21 family. Component of the WASH core complex also described as WASH regulatory complex SHRC composed of WASHC1, WASHC2, WASHC3, WASHC4 and WASHC5; in the complex interacts (via N-terminus) directly with WASHC1. The WASH core complex associates via WASHC2 with the F-actin-capping protein dimer (formed by CAPZA1, CAPZA2 or CAPZA3 and CAPZB) in a transient or substoichiometric manner which was initially described as WASH complex. Interacts with VPS35; mediates the association with the retromer CSC complex. Interacts with FKBP15. Interacts with CCDC93, CCDC22, C16orf62 homolog; indicative for an association of the WASH core complex with the CCC complex. Directly interacts with TBC1D23.

It localises to the early endosome membrane. The protein resides in the cell membrane. Acts as a component of the WASH core complex that functions as a nucleation-promoting factor (NPF) at the surface of endosomes, where it recruits and activates the Arp2/3 complex to induce actin polymerization, playing a key role in the fission of tubules that serve as transport intermediates during endosome sorting. Mediates the recruitment of the WASH core complex to endosome membranes via binding to phospholipids and VPS35 of the retromer CSC. Mediates the recruitment of the F-actin-capping protein dimer to the WASH core complex probably promoting localized F-actin polymerization needed for vesicle scission. Via its C-terminus binds various phospholipids, most strongly phosphatidylinositol 4-phosphate (PtdIns-(4)P), phosphatidylinositol 5-phosphate (PtdIns-(5)P) and phosphatidylinositol 3,5-bisphosphate (PtdIns-(3,5)P2). Involved in the endosome-to-plasma membrane trafficking and recycling of SNX27-retromer-dependent cargo proteins, such as GLUT1. Required for the association of DNAJC13, ENTR1, ANKRD50 with retromer CSC subunit VPS35. Required for the endosomal recruitment of CCC complex subunits COMMD1, CCDC93 and C16orf62 homolog. This is WASH complex subunit 2 from Cricetulus griseus (Chinese hamster).